The following is a 357-amino-acid chain: UDP-N-acetylglucosamine--N-acetylmuramyl-(pentapeptide) pyrophosphoryl-undecaprenol N-acetylglucosamine transferase (357 aa).

UDP-N-acetyl-alpha-D-glucosamine is bound by residues 15-17 (TGG), Asn-124, Arg-165, Ser-191, and Gln-285.

It belongs to the glycosyltransferase 28 family. MurG subfamily.

The protein localises to the cell inner membrane. It carries out the reaction di-trans,octa-cis-undecaprenyl diphospho-N-acetyl-alpha-D-muramoyl-L-alanyl-D-glutamyl-meso-2,6-diaminopimeloyl-D-alanyl-D-alanine + UDP-N-acetyl-alpha-D-glucosamine = di-trans,octa-cis-undecaprenyl diphospho-[N-acetyl-alpha-D-glucosaminyl-(1-&gt;4)]-N-acetyl-alpha-D-muramoyl-L-alanyl-D-glutamyl-meso-2,6-diaminopimeloyl-D-alanyl-D-alanine + UDP + H(+). Its pathway is cell wall biogenesis; peptidoglycan biosynthesis. Functionally, cell wall formation. Catalyzes the transfer of a GlcNAc subunit on undecaprenyl-pyrophosphoryl-MurNAc-pentapeptide (lipid intermediate I) to form undecaprenyl-pyrophosphoryl-MurNAc-(pentapeptide)GlcNAc (lipid intermediate II). This Microcystis aeruginosa (strain NIES-843 / IAM M-2473) protein is UDP-N-acetylglucosamine--N-acetylmuramyl-(pentapeptide) pyrophosphoryl-undecaprenol N-acetylglucosamine transferase.